A 148-amino-acid polypeptide reads, in one-letter code: Calmodulin-4 (148 aa).

EF-hand domains follow at residues 8–43 (EEVA…LGKN), 44–79 (LPEK…YKKG), 80–115 (HRAG…LGES), and 116–148 (LSQE…HVEN). Residues D21, N23, D25, H27, E32, D57, D59, D61, K63, E68, D93, N95, D97, Y99, and E104 each coordinate Ca(2+).

Implicated in the early stage of ectopic ossification. The chain is Calmodulin-4 (Calm4) from Mus musculus (Mouse).